The chain runs to 157 residues: Protein snakeskin (157 aa).

The Cytoplasmic portion of the chain corresponds to 2 to 6; it reads VSVQT. The helical transmembrane segment at 7–27 threads the bilayer; it reads IATIVVKTFKIVLNIIILVLY. Topologically, residues 28–53 are extracellular; the sequence is RTGYNGEFLGVGGTWNLNEEKNPDAE. A helical transmembrane segment spans residues 54-74; it reads IVASGVIVGYLIYTLVQIVTF. Residues 75-87 are Cytoplasmic-facing; sequence LFGTTEHKRALSE. The helical transmembrane segment at 88-108 threads the bilayer; sequence IVMNFVGVFLWIAVGAVALHY. The Extracellular segment spans residues 109–130; the sequence is WGGYQGEHQFQFVFAEKQVGLA. A helical membrane pass occupies residues 131–151; the sequence is VGALCVINGAIYLLDTALSVI. The Cytoplasmic segment spans residues 152–157; the sequence is HFTKEM.

In terms of tissue distribution, expressed in midgut epithelium (at protein level).

The protein localises to the apicolateral cell membrane. The protein resides in the cell junction. It localises to the septate junction. In terms of biological role, required for assembly of smooth septate junctions (sSJs). May be important for barrier function of the midgut epithelium. In Bombyx mori (Silk moth), this protein is Protein snakeskin.